The sequence spans 628 residues: tRNA (guanine(37)-N(1))-methyltransferase (628 aa).

Residues His-265, 303 to 304, 342 to 343, and Asn-445 each bind S-adenosyl-L-methionine; these read DL and DG.

Belongs to the class I-like SAM-binding methyltransferase superfamily. TRM5/TYW2 family. In terms of assembly, monomer.

The protein resides in the mitochondrion matrix. The protein localises to the nucleus. It is found in the cytoplasm. The enzyme catalyses guanosine(37) in tRNA + S-adenosyl-L-methionine = N(1)-methylguanosine(37) in tRNA + S-adenosyl-L-homocysteine + H(+). In terms of biological role, specifically methylates the N1 position of guanosine-37 in various cytoplasmic and mitochondrial tRNAs. Methylation is not dependent on the nature of the nucleoside 5' of the target nucleoside. This is the first step in the biosynthesis of wybutosine (yW), a modified base adjacent to the anticodon of tRNAs and required for accurate decoding. The protein is tRNA (guanine(37)-N(1))-methyltransferase of Mycosarcoma maydis (Corn smut fungus).